We begin with the raw amino-acid sequence, 518 residues long: Phytoene desaturase (neurosporene-forming) (518 aa).

An FAD-binding site is contributed by 14 to 47; the sequence is LVIGSGLGGLAAAMRLGAKGWRVTVIDKLDVPGG.

It belongs to the carotenoid/retinoid oxidoreductase family. FAD is required as a cofactor.

It carries out the reaction 15-cis-phytoene + 3 A = all-trans-neurosporene + 3 AH2. Its pathway is carotenoid biosynthesis. Its function is as follows. Converts phytoene into all-trans-neurosporene as the major product, via the intermediary of phytofluene and zeta-carotene, by the introduction of three double bonds. This is Phytoene desaturase (neurosporene-forming) (crtI) from Cereibacter sphaeroides (strain ATCC 17023 / DSM 158 / JCM 6121 / CCUG 31486 / LMG 2827 / NBRC 12203 / NCIMB 8253 / ATH 2.4.1.) (Rhodobacter sphaeroides).